The chain runs to 99 residues: Large ribosomal subunit protein uL23 (99 aa).

The protein belongs to the universal ribosomal protein uL23 family. Part of the 50S ribosomal subunit. Contacts protein L29, and trigger factor when it is bound to the ribosome.

In terms of biological role, one of the early assembly proteins it binds 23S rRNA. One of the proteins that surrounds the polypeptide exit tunnel on the outside of the ribosome. Forms the main docking site for trigger factor binding to the ribosome. The protein is Large ribosomal subunit protein uL23 of Agathobacter rectalis (strain ATCC 33656 / DSM 3377 / JCM 17463 / KCTC 5835 / VPI 0990) (Eubacterium rectale).